The following is a 379-amino-acid chain: Probable G-protein coupled receptor No18 (379 aa).

Residues 5-36 (EASITGRTAPELNASAAPLDDERELGETVAAT) lie on the Extracellular side of the membrane. An N-linked (GlcNAc...) asparagine glycan is attached at Asn-17. A helical membrane pass occupies residues 37–58 (ALLLAIILVTIVGNSLVIISVF). The Cytoplasmic segment spans residues 59-68 (TYRPLRSVQN). A helical transmembrane segment spans residues 69 to 90 (FFVVSLAVADLTVALFVLPLNV). At 91–107 (AYRLLNQWLLGSYLCQM) the chain is on the extracellular side. Cys-105 and Cys-184 are disulfide-bonded. The helical transmembrane segment at 108–128 (WLTCDILCCTSSILNLCVIAL) threads the bilayer. Residues 129 to 148 (DRYWAITDPINYAQKRTIRR) are Cytoplasmic-facing. A helical membrane pass occupies residues 149–171 (VNTMIAAVWALSLVISVPPLLGW). Over 172–196 (NDWPAQFTEDTPCTLTQERLFVVYS) the chain is Extracellular. Residues 197 to 218 (SSGSFFIPLIIMSVVYAKIFFA) traverse the membrane as a helical segment. Residues 219–303 (TKRRLRERTR…LSKERKAARV (85 aa)) are Cytoplasmic-facing. A disordered region spans residues 234–276 (AVPAPPQRTSSRPLAELESVASQEDETEPSPEPEPLSSRADKP). A helical membrane pass occupies residues 304-325 (LGVIMGVFVVCWLPFFLMYAIV). The Extracellular portion of the chain corresponds to 326-340 (PFCTNCAPPSQRVVD). The chain crosses the membrane as a helical span at residues 341–362 (FVTWLGYVNSSLNPIIYTIYNK). Residues 363 to 375 (DFRTAFSRLLRCD) lie on the Cytoplasmic side of the membrane.

Belongs to the G-protein coupled receptor 1 family.

The protein resides in the cell membrane. Its function is as follows. Probable G-protein coupled receptor for an amine. This is Probable G-protein coupled receptor No18 from Amphibalanus amphitrite (Striped barnacle).